Here is a 1096-residue protein sequence, read N- to C-terminus: Pullulanase (1096 aa).

Residues Met-1 to Gly-19 form the signal peptide. The N-palmitoyl cysteine moiety is linked to residue Cys-20. A lipid anchor (S-diacylglycerol cysteine) is attached at Cys-20. Residues Ser-24 to Ser-34 are compositionally biased toward low complexity. Residues Ser-24–Gln-50 are disordered. Catalysis depends on Asp-694, which acts as the Nucleophile. The Proton donor role is filled by Glu-723. The segment at Gln-1014–Arg-1044 is disordered.

This sequence belongs to the glycosyl hydrolase 13 family. Homotrimer.

It localises to the cell membrane. It catalyses the reaction Hydrolysis of (1-&gt;6)-alpha-D-glucosidic linkages in pullulan, amylopectin and glycogen, and in the alpha- and beta-limit dextrins of amylopectin and glycogen.. The chain is Pullulanase (pulA) from Klebsiella aerogenes (Enterobacter aerogenes).